The following is a 663-amino-acid chain: Oxytetracycline resistance protein (663 aa).

One can recognise a tr-type G domain in the interval 1 to 252 (MNKLNLGILA…GIRELLPSVH (252 aa)). GTP is bound by residues 10-17 (AHVDAGKT), 74-78 (DTPGH), and 128-131 (NKID).

It belongs to the TRAFAC class translation factor GTPase superfamily. Classic translation factor GTPase family. TetM/TetO subfamily.

In terms of biological role, abolishes the inhibitory effect of oxytetracycline on protein synthesis by a non-covalent modification of the ribosomes. This Streptomyces rimosus protein is Oxytetracycline resistance protein (otrA).